Consider the following 390-residue polypeptide: Zinc transporter 8 (390 aa).

A signal peptide spans 1–25; the sequence is MRTNTTATVLLAAAVALLLATAARG. An N-linked (GlcNAc...) asparagine glycan is attached at Asn-4. The Extracellular segment spans residues 26 to 50; that stretch reads DGGDGGCGKEDAAAGRDRARARGLK. Residues 51 to 71 form a helical membrane-spanning segment; the sequence is IAAFFSILVCGALGCGLPSLG. The Cytoplasmic segment spans residues 72 to 82; that stretch reads RHVPALRPDGD. Residues 83-103 traverse the membrane as a helical segment; that stretch reads VFFLVKAFAAGVILATGFIHI. Residues 104-124 lie on the Extracellular side of the membrane; that stretch reads LPDAFDNLTDDCLPAGGPWKE. An N-linked (GlcNAc...) asparagine glycan is attached at Asn-110. Residues 125–145 traverse the membrane as a helical segment; the sequence is FPFAGFGAMVGAIGTLVVDTL. Topologically, residues 146 to 235 are cytoplasmic; it reads ATGYFTRALS…DDKETTLRHR (90 aa). Residues 165–199 form a disordered region; that stretch reads VADEEKQSAAATQQHNHHHNHHVVGDGGGGGEEHE. A helical membrane pass occupies residues 236-256; that stretch reads VISQVLELGIVVHSVIIGISL. The Extracellular portion of the chain corresponds to 257-267; it reads GASQNPETIKP. The helical transmembrane segment at 268–288 threads the bilayer; sequence LVVALSFHQMFEGMGLGGCIV. Over 289–296 the chain is Cytoplasmic; the sequence is QAKFKVRS. Residues 297-317 traverse the membrane as a helical segment; the sequence is IVTMVLFFCLTTPVGIAVGVG. At 318-329 the chain is on the extracellular side; the sequence is ISSVYNESSPTA. A glycan (N-linked (GlcNAc...) asparagine) is linked at Asn-323. A helical membrane pass occupies residues 330-350; that stretch reads LVVEGILNSVAAGILIYMALV. The Cytoplasmic portion of the chain corresponds to 351–369; the sequence is DLLAEDFMNPRVQSKGKLQ. The helical transmembrane segment at 370 to 390 threads the bilayer; that stretch reads LGINLAMLAGAGLMSMLAKWA.

It belongs to the ZIP transporter (TC 2.A.5) family.

It localises to the cell membrane. Zinc transporter that may mediate zinc uptake from the rhizosphere and may be responsible for the translocation of zinc within the plant. This chain is Zinc transporter 8 (ZIP8), found in Oryza sativa subsp. japonica (Rice).